A 585-amino-acid polypeptide reads, in one-letter code: Formate--tetrahydrofolate ligase (585 aa).

74–81 lines the ATP pocket; sequence TPLGEGKT.

It belongs to the formate--tetrahydrofolate ligase family.

It carries out the reaction (6S)-5,6,7,8-tetrahydrofolate + formate + ATP = (6R)-10-formyltetrahydrofolate + ADP + phosphate. Its pathway is one-carbon metabolism; tetrahydrofolate interconversion. The protein is Formate--tetrahydrofolate ligase of Yersinia enterocolitica serotype O:8 / biotype 1B (strain NCTC 13174 / 8081).